The primary structure comprises 168 residues: MKCPYCGFAQDRVVDSRESKEADSIRRRRECERCNKRFTTYERIDEIPYMVVKKDGRREKFDRHKVLSGLLRACEKRPISATKLENLVDETEAYLMDSAERERSTTEIGLLLMEKLKQLDTVSYIRFASVYRDFKDVNEFKEELEQLLTSKEPLSRRRTGKAGSAQDE.

A zinc finger spans residues 3-34 (CPYCGFAQDRVVDSRESKEADSIRRRRECERC). The region spanning 49-139 (YMVVKKDGRR…VYRDFKDVNE (91 aa)) is the ATP-cone domain.

The protein belongs to the NrdR family. Requires Zn(2+) as cofactor.

Negatively regulates transcription of bacterial ribonucleotide reductase nrd genes and operons by binding to NrdR-boxes. This Acidobacterium capsulatum (strain ATCC 51196 / DSM 11244 / BCRC 80197 / JCM 7670 / NBRC 15755 / NCIMB 13165 / 161) protein is Transcriptional repressor NrdR.